Reading from the N-terminus, the 203-residue chain is Thymidylate kinase (203 aa).

ATP is bound at residue Gly-7–Ser-14.

Belongs to the thymidylate kinase family.

It carries out the reaction dTMP + ATP = dTDP + ADP. Its function is as follows. Phosphorylation of dTMP to form dTDP in both de novo and salvage pathways of dTTP synthesis. The chain is Thymidylate kinase from Finegoldia magna (strain ATCC 29328 / DSM 20472 / WAL 2508) (Peptostreptococcus magnus).